The chain runs to 512 residues: Lysine--tRNA ligase (512 aa).

2 residues coordinate Mg(2+): Glu408 and Glu415.

Belongs to the class-II aminoacyl-tRNA synthetase family. As to quaternary structure, homodimer. Mg(2+) serves as cofactor.

It localises to the cytoplasm. The enzyme catalyses tRNA(Lys) + L-lysine + ATP = L-lysyl-tRNA(Lys) + AMP + diphosphate. The polypeptide is Lysine--tRNA ligase (Prochlorococcus marinus (strain MIT 9215)).